A 696-amino-acid polypeptide reads, in one-letter code: MLYQLVVDSPSFKKVIRLQNSCYSIGRHPSNTIVIPSPQISRRHATLIKKINPNLDISFHIIDGDLEGHRSRNGVWVNGESHLDYELVHGDVIALSEDIQIFYQAIPTDPKDTISGGGDRQRLTPDLSEHFPQEQWDITLIGHEDDLSQLSHEKLSKLAACIEYSPYPMVEIDYFGNLTYLNTATKEKFPSIQKDSMAHPLLKDIIPQREDTPIYYLRTREVQIGDKFYEQHIHYPAESQFIRSYIFDITERKVIEQSIHYQAFYDPLTDLPNRFLFKQELGKVLSNVQNQSSVLGLVLLGFRELQSLNDLLGHSVADEVLKIITERLSAHVRLEDLLCRWRGDTFILLIQSCRNLDEIEVFVRRLLAVLKRPFFIANNPLYLQGYAGIACYPNHGDNVEILLNRVGIALNEVKDIGSRQYCFYEESMNSDHLERIQLEHALHQALERDEFLLYYQPIIDVQSGRLCGVEALIRWQHPIHGLVSPGLFIGLLETTGLIIPVGEWIMRTAFQHFHHWAPAVDDDFRIAINLSPQQFQAPDLLPTILRILAESSLPPHRLEVEITENIVMQNVTATQNLLNALQSHGIRLSMDDFGTGYSSLSYLKTFPFNTLKIDRSFTKDILHTPKDAAIIQAMLLLGNGFNLNIIAEGIEEEPQARCLYDLGCREMQGYWFSHPLSEAEITAFLAEGNFQRFCLG.

A GGDEF domain is found at Ser293–Glu426. Residues Arg435–Asn689 enclose the EAL domain.

This is an uncharacterized protein from Synechocystis sp. (strain ATCC 27184 / PCC 6803 / Kazusa).